A 184-amino-acid polypeptide reads, in one-letter code: Photosystem I assembly protein Ycf4 (184 aa).

2 helical membrane passes run 22-42 and 57-77; these read FCWA…GISS and IVFF…LFIS.

It belongs to the Ycf4 family.

The protein localises to the plastid. It is found in the chloroplast thylakoid membrane. In terms of biological role, seems to be required for the assembly of the photosystem I complex. The chain is Photosystem I assembly protein Ycf4 from Coffea arabica (Arabian coffee).